The following is a 173-amino-acid chain: Co-chaperone protein HscB homolog (173 aa).

The J domain occupies 5–77; the sequence is CHYALFDLQP…PRRARYLLAI (73 aa).

Belongs to the HscB family. In terms of assembly, interacts with HscA and stimulates its ATPase activity.

In terms of biological role, co-chaperone involved in the maturation of iron-sulfur cluster-containing proteins. Seems to help targeting proteins to be folded toward HscA. This chain is Co-chaperone protein HscB homolog, found in Pseudomonas entomophila (strain L48).